Reading from the N-terminus, the 208-residue chain is Large ribosomal subunit protein uL3 (208 aa).

Gln149 bears the N5-methylglutamine mark.

Belongs to the universal ribosomal protein uL3 family. In terms of assembly, part of the 50S ribosomal subunit. Forms a cluster with proteins L14 and L19. Methylated by PrmB.

One of the primary rRNA binding proteins, it binds directly near the 3'-end of the 23S rRNA, where it nucleates assembly of the 50S subunit. The chain is Large ribosomal subunit protein uL3 from Actinobacillus pleuropneumoniae serotype 5b (strain L20).